The chain runs to 562 residues: Formate--tetrahydrofolate ligase (562 aa).

ATP is bound at residue 71–78 (TPAGEGKS).

It belongs to the formate--tetrahydrofolate ligase family.

It catalyses the reaction (6S)-5,6,7,8-tetrahydrofolate + formate + ATP = (6R)-10-formyltetrahydrofolate + ADP + phosphate. The protein operates within one-carbon metabolism; tetrahydrofolate interconversion. The chain is Formate--tetrahydrofolate ligase from Bacillus cereus (strain AH187).